We begin with the raw amino-acid sequence, 358 residues long: DNA replication and repair protein RecF (358 aa).

Residue 30-37 (GANGSGKT) participates in ATP binding.

This sequence belongs to the RecF family.

The protein localises to the cytoplasm. The RecF protein is involved in DNA metabolism; it is required for DNA replication and normal SOS inducibility. RecF binds preferentially to single-stranded, linear DNA. It also seems to bind ATP. This is DNA replication and repair protein RecF from Acinetobacter baylyi (strain ATCC 33305 / BD413 / ADP1).